Here is a 386-residue protein sequence, read N- to C-terminus: 2-deoxy-scyllo-inosose synthase (386 aa).

NAD(+)-binding positions include Asp42, 73-76 (EEHK), 105-109 (GVTGN), 129-130 (TT), 140-142 (SLK), and 151-152 (KN). Residue Lys142 is part of the active site. Glu184 contributes to the Co(2+) binding site. Glu244 is an active-site residue. The Co(2+) site is built by His247 and His263.

It belongs to the sugar phosphate cyclases superfamily. DOI synthase family. The cofactor is NAD(+). Co(2+) is required as a cofactor.

The catalysed reaction is D-glucose 6-phosphate = 2-deoxy-L-scyllo-inosose + phosphate. It functions in the pathway metabolic intermediate biosynthesis; 2-deoxystreptamine biosynthesis; 2-deoxystreptamine from D-glucose 6-phosphate: step 1/4. Its pathway is antibiotic biosynthesis; tobramycin biosynthesis. Functionally, catalyzes the intramolecular carbocycle formation from D-glucose-6-phosphate to 2-deoxy-scyllo-inosose (DOI). The chain is 2-deoxy-scyllo-inosose synthase (tbmA) from Streptoalloteichus tenebrarius (strain ATCC 17920 / DSM 40477 / JCM 4838 / CBS 697.72 / NBRC 16177 / NCIMB 11028 / NRRL B-12390 / A12253. 1 / ISP 5477) (Streptomyces tenebrarius).